A 380-amino-acid chain; its full sequence is Transaldolase (380 aa).

The active-site Schiff-base intermediate with substrate is the Lys-141.

The protein belongs to the transaldolase family. Type 2 subfamily.

It is found in the cytoplasm. It carries out the reaction D-sedoheptulose 7-phosphate + D-glyceraldehyde 3-phosphate = D-erythrose 4-phosphate + beta-D-fructose 6-phosphate. It functions in the pathway carbohydrate degradation; pentose phosphate pathway; D-glyceraldehyde 3-phosphate and beta-D-fructose 6-phosphate from D-ribose 5-phosphate and D-xylulose 5-phosphate (non-oxidative stage): step 2/3. In terms of biological role, transaldolase is important for the balance of metabolites in the pentose-phosphate pathway. This Trichodesmium erythraeum (strain IMS101) protein is Transaldolase.